The sequence spans 1508 residues: ABC-type transporter oblD (1508 aa).

Disordered stretches follow at residues 1-35 (MSLGPGGFEATPNSVMPSDASLHNQSHHTDSLTNN) and 54-82 (KYTQNSVYSTTSQNPFAAEPGSKLDPNGG). Residues 11 to 24 (TPNSVMPSDASLHN) show a composition bias toward polar residues. Residues N24 and N35 are each glycosylated (N-linked (GlcNAc...) asparagine). The segment covering 55–68 (YTQNSVYSTTSQNP) has biased composition (polar residues). 3 N-linked (GlcNAc...) asparagine glycosylation sites follow: N83, N231, and N314. Residues 136-390 (LEAVGLVRKL…FLNMGFVCPD (255 aa)) enclose the ABC transporter 1 domain. Transmembrane regions (helical) follow at residues 501–521 (ITISSAMGNAIIALIISSMFF), 536–556 (LLFFAIVINAFSSGLEMLTLY), 610–630 (GNFFFFVFTSFVLTLTMSMFF), 643–663 (ALPFAAILITGLTMYTGFTIP), and 752–772 (GIIFAFMVILCAIYLVASDFI). Positions 828-1070 (FQWKDICYDI…ILIDYFTRNG (243 aa)) constitute an ABC transporter 2 domain. An ATP-binding site is contributed by 864–871 (GVSGAGKT). 4 consecutive transmembrane segments (helical) span residues 1172–1192 (YIYSKAFLCVSTSLYVGFSLY), 1206–1226 (FAIFTLFFLFGQFIQQIMPHF), 1296–1316 (LFVWVFLMFASTFAHFMIAAL), and 1322–1342 (AGNMGNLLFTLCVIFCGILTT). N-linked (GlcNAc...) asparagine glycosylation is present at N1390. A helical membrane pass occupies residues 1443–1463 (FGLMWVFVVFNAFAACGLYYW).

The protein belongs to the ABC transporter superfamily. ABCG family. PDR (TC 3.A.1.205) subfamily.

It localises to the cell membrane. Its function is as follows. ABC-type transporter; part of the gene cluster that mediates the biosynthesis of the sesterterpenes ophiobolins, fungal phytotoxins with potential anti-cancer activities. Acts as a specific transporter involved in ophiobolins secretion. The polypeptide is ABC-type transporter oblD (Cochliobolus heterostrophus (strain C5 / ATCC 48332 / race O) (Southern corn leaf blight fungus)).